Consider the following 180-residue polypeptide: ADP-ribosylation factor 4 (180 aa).

Residue Gly2 is the site of N-myristoyl glycine attachment. Residues 24–31 (GLDAAGKT), 67–71 (DVGGQ), and 126–129 (NKQD) each bind GTP. The residue at position 147 (Ser147) is a Phosphoserine.

It belongs to the small GTPase superfamily. Arf family. As to quaternary structure, forms a complex containing RAB11A, ASAP1, RAB3IP, RAP11FIP3 and ARF4; the complex promotes preciliary trafficking; the complex binds to RHO in photoreceptor cells and promotes RHO ciliary transport.

The protein localises to the golgi apparatus. It is found in the membrane. Functionally, GTP-binding protein that functions as an allosteric activator of the cholera toxin catalytic subunit, an ADP-ribosyltransferase. Involved in protein trafficking; may modulate vesicle budding and uncoating within the Golgi apparatus. Part of the ciliary targeting complex containing Rab11, ASAP1, Rabin8/RAB3IP, RAB11FIP3 and ARF4, which direct preciliary vesicle trafficking to mother centriole and ciliogenesis initiation. This is ADP-ribosylation factor 4 (ARF4) from Homo sapiens (Human).